The following is a 1706-amino-acid chain: Bifunctional hemolysin/adenylate cyclase (1706 aa).

The tract at residues 1-399 (MQQSHQAGYA…RRPSLGAVER (399 aa)) is a, catalytic. Residue 349-356 (AYGVAGKS) coordinates ATP. The disordered stretch occupies residues 367–405 (GVPGGRSKSSPDVLETVPASPGLRRPSLGAVERQDSGYD). The interval 400–912 (QDSGYDSLDG…LKHSIKLEVI (513 aa)) is b, Ala/Gly-rich. Residues 500 to 698 (LSAAVFGLGE…SVVGAPVAVV (199 aa)) form a required for interaction with CyaC region. N6-palmitoyl lysine attachment occurs at residues Lys-860 and Lys-983. The segment at 913–1656 (GGDGDDVVLA…RDADHRVEAI (744 aa)) is c. 17 Hemolysin-type calcium-binding repeats span residues 1014–1031 (IGGAGNDSITGNAHDNFL), 1032–1049 (AGGAGDDRLDGGAGNDTL), 1050–1067 (VGGEGHNTVVGGAGDDVF), 1155–1172 (WGDDGNDTIHGRGGDDIL), 1173–1190 (RGGLGLDTLYGEDGNDIF), 1279–1296 (MGQGGDDTVRGGDGDDLL), 1297–1314 (FGGDGNDMLYGDAGNDTL), 1315–1332 (YGGLGDDTLEGGAGNDWF), 1335–1352 (TPAREHDVLRGGAGVDTV), 1411–1428 (TGDAQANVLRGAGGADVL), 1429–1446 (AGGEGDDVLLGGDGDDQL), 1447–1464 (SGDAGRDRLYGEAGDDWF), 1468–1484 (AANAGNLLDGGDGNDTV), 1537–1554 (IGDAGANVLNGLAGNDVL), 1555–1572 (SGGAGDDVLLGDEGSDLL), 1573–1590 (SGDAGNDDLFGGQGDDTY), and 1603–1620 (ESGGGHDTIRINAGADQL). The tract at residues 1657–1706 (HAANQAIDPAGIEKLVEAMAQYPDPGAAAAAPPAARVPDTLMQSLAVNWR) is d, Asp/Gly-rich.

It in the N-terminal section; belongs to the adenylyl cyclase class-2 family. This sequence in the C-terminal section; belongs to the RTX prokaryotic toxin family. In terms of processing, released in a processed form. Post-translationally, palmitoylated at Lys-860 and Lys-983 by CyaC. The toxin only becomes active when modified in position Lys-983: palmitoylation is required for efficient membrane insertion and pore formation of the acylated Hemolysin chain.

It is found in the secreted. It localises to the host cell membrane. It catalyses the reaction ATP = 3',5'-cyclic AMP + diphosphate. Activated by host calmodulin. Functionally, bifunctional adenylate cyclase toxin-hemolysin that plays a crucial role in host colonization. It causes whooping cough by acting on mammalian cells by elevating cAMP-concentration and thus disrupts normal cell function. Its function is as follows. Adenylate cyclase that is activated by host intracellular calmodulin and catalyzes un-regulated conversion of ATP to cAMP, thereby impairing microbicidal functions of immune effector cells and inducing apoptosis of lung macrophages. Hemolysin that forms small cation-selective membrane channels, leading to hemolytic activity. The hemolytic activity of CyaA is weak compared with that of the HlyA of E.coli. The sequence is that of Bifunctional hemolysin/adenylate cyclase (cya) from Bordetella bronchiseptica (strain ATCC BAA-588 / NCTC 13252 / RB50) (Alcaligenes bronchisepticus).